Consider the following 265-residue polypeptide: Small ribosomal subunit protein eS1 (265 aa).

2 disordered regions span residues Met1–Asp24 and His240–Gln265. Residues His240–Ala253 are compositionally biased toward basic and acidic residues.

It belongs to the eukaryotic ribosomal protein eS1 family. As to quaternary structure, component of the small ribosomal subunit. Mature ribosomes consist of a small (40S) and a large (60S) subunit. The 40S subunit contains about 33 different proteins and 1 molecule of RNA (18S). The 60S subunit contains about 49 different proteins and 3 molecules of RNA (25S, 5.8S and 5S).

It is found in the cytoplasm. This chain is Small ribosomal subunit protein eS1, found in Tetrahymena thermophila (strain SB210).